The following is a 130-amino-acid chain: Histone H2A type 2 (130 aa).

Positions 1–22 are disordered; sequence MSGRGKQGGKTRAKSKTRSSRA. N-acetylserine is present on Ser2. Ser2 bears the Phosphoserine mark. At Lys6 the chain carries N6-(2-hydroxyisobutyryl)lysine. Lys6 is modified (N6-acetyllysine). Basic residues predominate over residues 7 to 19; it reads QGGKTRAKSKTRS. Lys10 carries the N6-(2-hydroxyisobutyryl)lysine; alternate modification. An N6-lactoyllysine; alternate modification is found at Lys10. Residue Lys10 is modified to N6-succinyllysine. Glycyl lysine isopeptide (Lys-Gly) (interchain with G-Cter in ubiquitin) cross-links involve residues Lys14 and Lys16. Lys37 is subject to N6-(2-hydroxyisobutyryl)lysine; alternate. N6-(2-hydroxyisobutyryl)lysine is present on Lys76. Lys96 is subject to N6-(2-hydroxyisobutyryl)lysine; alternate. Lys96 is modified (N6-succinyllysine). Lys96 carries the post-translational modification N6-glutaryllysine; alternate. Gln105 carries the N5-methylglutamine modification. Lys119 is subject to N6-(2-hydroxyisobutyryl)lysine; alternate. An N6-glutaryllysine; alternate modification is found at Lys119. Residue Lys120 forms a Glycyl lysine isopeptide (Lys-Gly) (interchain with G-Cter in ubiquitin) linkage.

This sequence belongs to the histone H2A family. As to quaternary structure, the nucleosome is a histone octamer containing two molecules each of H2A, H2B, H3 and H4 assembled in one H3-H4 heterotetramer and two H2A-H2B heterodimers. The octamer wraps approximately 147 bp of DNA. In terms of processing, monoubiquitination of Lys-120 (H2AK119Ub) gives a specific tag for epigenetic transcriptional repression. Following DNA double-strand breaks (DSBs), it is ubiquitinated through 'Lys-63' linkage of ubiquitin moieties, leading to the recruitment of repair proteins to sites of DNA damage. H2AK119Ub and ionizing radiation-induced 'Lys-63'-linked ubiquitination are distinct events. Post-translationally, phosphorylation on Ser-2 is enhanced during mitosis. Phosphorylation on Ser-2 directly represses transcription. Glutamine methylation at Gln-105 (H2AQ104me) by FBL is specifically dedicated to polymerase I. It is present at 35S ribosomal DNA locus and impairs binding of the FACT complex.

It localises to the nucleus. The protein resides in the chromosome. In terms of biological role, core component of nucleosome. Nucleosomes wrap and compact DNA into chromatin, limiting DNA accessibility to the cellular machineries which require DNA as a template. Histones thereby play a central role in transcription regulation, DNA repair, DNA replication and chromosomal stability. DNA accessibility is regulated via a complex set of post-translational modifications of histones, also called histone code, and nucleosome remodeling. This is Histone H2A type 2 from Xenopus laevis (African clawed frog).